A 379-amino-acid chain; its full sequence is Cytochrome b (379 aa).

The next 4 membrane-spanning stretches (helical) occupy residues Phe33 to Met53, Trp77 to Val98, Trp113 to Leu133, and Phe178 to Leu198. Residues His83 and His97 each contribute to the heme b site. Positions 182 and 196 each coordinate heme b. His201 serves as a coordination point for a ubiquinone. The next 4 membrane-spanning stretches (helical) occupy residues Ile226–Phe246, Leu288–Asn308, Val320–Gly340, and Phe347–Pro367.

This sequence belongs to the cytochrome b family. The cytochrome bc1 complex contains 11 subunits: 3 respiratory subunits (MT-CYB, CYC1 and UQCRFS1), 2 core proteins (UQCRC1 and UQCRC2) and 6 low-molecular weight proteins (UQCRH/QCR6, UQCRB/QCR7, UQCRQ/QCR8, UQCR10/QCR9, UQCR11/QCR10 and a cleavage product of UQCRFS1). This cytochrome bc1 complex then forms a dimer. Requires heme b as cofactor.

It is found in the mitochondrion inner membrane. Its function is as follows. Component of the ubiquinol-cytochrome c reductase complex (complex III or cytochrome b-c1 complex) that is part of the mitochondrial respiratory chain. The b-c1 complex mediates electron transfer from ubiquinol to cytochrome c. Contributes to the generation of a proton gradient across the mitochondrial membrane that is then used for ATP synthesis. The sequence is that of Cytochrome b (MT-CYB) from Akodon subfuscus (Puno grass mouse).